A 383-amino-acid polypeptide reads, in one-letter code: 6-hydroxynicotinate 3-monooxygenase (383 aa).

The N-terminal stretch at 1–26 is a signal peptide; it reads MQGKPRIAVIGAGLGGTAGAALMARA. Residues Gly-15, 34-35, His-47, Arg-108, and Leu-130 contribute to the FAD site; that span reads EQ. The Proton acceptor role is filled by His-47. Tyr-214 (proton acceptor) is an active-site residue. FAD-binding positions include Asp-293 and 306 to 307; that span reads AA.

This sequence belongs to the 6-hydroxynicotinate 3-monooxygenase family. Monomer. It depends on FAD as a cofactor.

It carries out the reaction 6-hydroxynicotinate + NADH + O2 + 2 H(+) = 2,5-dihydroxypyridine + CO2 + NAD(+) + H2O. It participates in cofactor degradation; nicotinate degradation. Competitively inhibited by 6-hydroxynicotinaldehyde. Flavin-dependent monooxygenase (FMO) that catalyzes the decarboxylative hydroxylation of 6-hydroxynicotinic acid (6-HNA) to 2,5-dihydroxypyridine (2,5-DHP) with concomitant oxidation of NADH, a step in the aerobic nicotinate degradation pathway. Is also active on the non-natural substrate 5-chloro-6-hydroxynicotinate, and is much less efficient on the substrate analog 4-hydroxybenzoate. In Bordetella bronchiseptica (strain ATCC BAA-588 / NCTC 13252 / RB50) (Alcaligenes bronchisepticus), this protein is 6-hydroxynicotinate 3-monooxygenase.